The primary structure comprises 500 residues: Cytochrome P450 2D14 (500 aa).

Cysteine 446 provides a ligand contact to heme.

This sequence belongs to the cytochrome P450 family. Heme serves as cofactor.

It localises to the endoplasmic reticulum membrane. The protein localises to the microsome membrane. It catalyses the reaction an organic molecule + reduced [NADPH--hemoprotein reductase] + O2 = an alcohol + oxidized [NADPH--hemoprotein reductase] + H2O + H(+). In terms of biological role, cytochromes P450 are a group of heme-thiolate monooxygenases. In liver microsomes, this enzyme is involved in an NADPH-dependent electron transport pathway. It oxidizes a variety of structurally unrelated compounds, including steroids, fatty acids, and xenobiotics. In Bos taurus (Bovine), this protein is Cytochrome P450 2D14 (CYP2D14).